A 1863-amino-acid chain; its full sequence is E3 ubiquitin-protein ligase ubr3 (1863 aa).

The UBR-type zinc-finger motif lies at 80-151 (TLCGLVWTAN…ESGFCNRHRL (72 aa)). Disordered stretches follow at residues 302–330 (LDDS…SSTK), 970–995 (PEVE…SATF), and 1128–1152 (IPPK…RARE). Basic and acidic residues-rich tracts occupy residues 971–984 (EVER…ERET) and 1134–1152 (SPGD…RARE). The RING-type; degenerate zinc-finger motif lies at 1270–1328 (DSSCLQSVSIGWDGGVYVQTCGHTLHIDCHKSYMESLRNDQVLQGISVDKGEFTCPLCR).

It belongs to the E3 ubiquitin-protein ligase UBR1-like family.

It catalyses the reaction S-ubiquitinyl-[E2 ubiquitin-conjugating enzyme]-L-cysteine + [acceptor protein]-L-lysine = [E2 ubiquitin-conjugating enzyme]-L-cysteine + N(6)-ubiquitinyl-[acceptor protein]-L-lysine.. It participates in protein modification; protein ubiquitination. E3 ubiquitin-protein ligase which is a component of the N-end rule pathway. Recognizes and binds to proteins bearing specific N-terminal residues, leading to their ubiquitination and subsequent degradation. Positively regulates hedgehog/shh-signaling pathways that function in eye development, neuronal specification and somite development. Activation of shh up-regulates transcription of ubr3, which in turn promotes hedgehog/shh signaling possibly by controlling negative regulators such as Kif7. This chain is E3 ubiquitin-protein ligase ubr3, found in Danio rerio (Zebrafish).